A 386-amino-acid polypeptide reads, in one-letter code: MVRTRYEYSLRSKKIRIFDTTLRDGEQAPGIDLTTEQKIMIARKLADLGVDVIEAGFPASSEGEFIATRKIFEEIGDQVEVIGLSRSNKNDIDKTISTGISSIHLFIATSELHMKYKLKMTKEEVLNKIYESVKYAKDHGMIVEFSPEDATRTEEDFLFTAIRTAIEAGADRINIPDTVGTMHPFKYYDMIKKIVNFVGERIIVSVHCHNDFGLATANSLAGVYAGARQAHVTVNGIGERAGNASLEEVVMGIKKLLNYETNVKTWKLYEVSRFVAEMTGVPVPYFKAIVGDNAFGHESGIHVHGVIENPFTYEPISPEEVGNFRRLALGKHSGIHGLRKLLEEQGIYLSDDKLKIVLAEIKKLAESGNKVTVEDAKNIALKLMNS.

Positions 15-269 constitute a Pyruvate carboxyltransferase domain; that stretch reads IRIFDTTLRD…ETNVKTWKLY (255 aa). Positions 24, 207, 209, and 243 each coordinate a divalent metal cation.

The protein belongs to the alpha-IPM synthase/homocitrate synthase family. In terms of assembly, homodimer. The cofactor is a divalent metal cation.

It carries out the reaction 3-methyl-2-oxobutanoate + acetyl-CoA + H2O = (2S)-2-isopropylmalate + CoA + H(+). It functions in the pathway amino-acid biosynthesis; L-leucine biosynthesis; L-leucine from 3-methyl-2-oxobutanoate: step 1/4. Its function is as follows. Catalyzes the condensation of the acetyl group of acetyl-CoA with 3-methyl-2-oxobutanoate (2-oxoisovalerate) to form 3-carboxy-3-hydroxy-4-methylpentanoate (2-isopropylmalate). Carries out the first step of the leucine biosynthesis pathway. The polypeptide is 2-isopropylmalate synthase (leuA) (Saccharolobus solfataricus (strain ATCC 35092 / DSM 1617 / JCM 11322 / P2) (Sulfolobus solfataricus)).